The primary structure comprises 209 residues: Thymidine kinase (209 aa).

ATP contacts are provided by residues 25-32 (GCMFAGKT) and 103-106 (DEVQ). Residue Glu104 is the Proton acceptor of the active site. Cys160, Cys163, Cys198, and Cys201 together coordinate Zn(2+).

Belongs to the thymidine kinase family. In terms of assembly, homotetramer.

The protein localises to the cytoplasm. It carries out the reaction thymidine + ATP = dTMP + ADP + H(+). In Mycoplasma capricolum subsp. capricolum (strain California kid / ATCC 27343 / NCTC 10154), this protein is Thymidine kinase.